Here is a 618-residue protein sequence, read N- to C-terminus: UvrABC system protein C (618 aa).

Positions 13-92 (DKPGVYLMKN…IKKYRPKYNI (80 aa)) constitute a GIY-YIG domain. Positions 204–239 (LDIVENFKLNMEKAAGNLEFEKAAMLRDKINIIEKI) constitute a UVR domain.

This sequence belongs to the UvrC family. As to quaternary structure, interacts with UvrB in an incision complex.

The protein resides in the cytoplasm. Its function is as follows. The UvrABC repair system catalyzes the recognition and processing of DNA lesions. UvrC both incises the 5' and 3' sides of the lesion. The N-terminal half is responsible for the 3' incision and the C-terminal half is responsible for the 5' incision. The protein is UvrABC system protein C of Clostridium botulinum (strain 657 / Type Ba4).